Consider the following 311-residue polypeptide: Thioredoxin reductase (311 aa).

Residue 35–42 (ERGIPGGQ) participates in FAD binding. A disulfide bond links Cys-134 and Cys-137. FAD is bound at residue 277–286 (DVRDKGLRQI).

The protein belongs to the class-II pyridine nucleotide-disulfide oxidoreductase family. Homodimer. It depends on FAD as a cofactor.

It is found in the cytoplasm. The catalysed reaction is [thioredoxin]-dithiol + NADP(+) = [thioredoxin]-disulfide + NADPH + H(+). The polypeptide is Thioredoxin reductase (trxB) (Staphylococcus aureus (strain MRSA252)).